A 156-amino-acid polypeptide reads, in one-letter code: Cyclic pyranopterin monophosphate synthase (156 aa).

Residues Leu-73–His-75 and Met-110–Glu-111 each bind substrate. The active site involves Asp-125.

It belongs to the MoaC family. In terms of assembly, homohexamer; trimer of dimers.

The catalysed reaction is (8S)-3',8-cyclo-7,8-dihydroguanosine 5'-triphosphate = cyclic pyranopterin phosphate + diphosphate. Its pathway is cofactor biosynthesis; molybdopterin biosynthesis. Functionally, catalyzes the conversion of (8S)-3',8-cyclo-7,8-dihydroguanosine 5'-triphosphate to cyclic pyranopterin monophosphate (cPMP). In Pseudomonas entomophila (strain L48), this protein is Cyclic pyranopterin monophosphate synthase.